The primary structure comprises 147 residues: Probable cytidine deaminase (147 aa).

The CMP/dCMP-type deaminase domain occupies 4-130 (EELEKCIDAA…KLLPGLFSQE (127 aa)). Residue 45 to 51 (NVENSSY) coordinates substrate. Residue Cys56 coordinates Zn(2+). Glu58 (proton donor) is an active-site residue. Zn(2+) is bound by residues Cys90 and Cys93.

The protein belongs to the cytidine and deoxycytidylate deaminase family. Zn(2+) is required as a cofactor.

The enzyme catalyses cytidine + H2O + H(+) = uridine + NH4(+). The catalysed reaction is 2'-deoxycytidine + H2O + H(+) = 2'-deoxyuridine + NH4(+). Its function is as follows. This enzyme scavenges exogenous and endogenous cytidine and 2'-deoxycytidine for UMP synthesis. This Dictyostelium discoideum (Social amoeba) protein is Probable cytidine deaminase (cda).